The following is a 260-amino-acid chain: Indole-3-glycerol phosphate synthase (260 aa).

Belongs to the TrpC family.

The enzyme catalyses 1-(2-carboxyphenylamino)-1-deoxy-D-ribulose 5-phosphate + H(+) = (1S,2R)-1-C-(indol-3-yl)glycerol 3-phosphate + CO2 + H2O. Its pathway is amino-acid biosynthesis; L-tryptophan biosynthesis; L-tryptophan from chorismate: step 4/5. In Bacteroides thetaiotaomicron (strain ATCC 29148 / DSM 2079 / JCM 5827 / CCUG 10774 / NCTC 10582 / VPI-5482 / E50), this protein is Indole-3-glycerol phosphate synthase.